A 144-amino-acid chain; its full sequence is Large-conductance mechanosensitive channel (144 aa).

Helical transmembrane passes span 16-36 and 86-106; these read VIDL…VDSV and GNFL…FLMV.

The protein belongs to the MscL family. Homopentamer.

The protein localises to the cell inner membrane. In terms of biological role, channel that opens in response to stretch forces in the membrane lipid bilayer. May participate in the regulation of osmotic pressure changes within the cell. The sequence is that of Large-conductance mechanosensitive channel from Cupriavidus pinatubonensis (strain JMP 134 / LMG 1197) (Cupriavidus necator (strain JMP 134)).